Reading from the N-terminus, the 266-residue chain is Thymidylate synthase (266 aa).

Residues Arg20 and 129–130 (RR) each bind dUMP. The Nucleophile role is filled by Cys149. Residues 169–172 (RSCD), Asn180, and 210–212 (HVY) contribute to the dUMP site. A (6R)-5,10-methylene-5,6,7,8-tetrahydrofolate-binding site is contributed by Asp172. Residue Ala265 participates in (6R)-5,10-methylene-5,6,7,8-tetrahydrofolate binding.

The protein belongs to the thymidylate synthase family. Bacterial-type ThyA subfamily. As to quaternary structure, homodimer.

Its subcellular location is the cytoplasm. It carries out the reaction dUMP + (6R)-5,10-methylene-5,6,7,8-tetrahydrofolate = 7,8-dihydrofolate + dTMP. It participates in pyrimidine metabolism; dTTP biosynthesis. Catalyzes the reductive methylation of 2'-deoxyuridine-5'-monophosphate (dUMP) to 2'-deoxythymidine-5'-monophosphate (dTMP) while utilizing 5,10-methylenetetrahydrofolate (mTHF) as the methyl donor and reductant in the reaction, yielding dihydrofolate (DHF) as a by-product. This enzymatic reaction provides an intracellular de novo source of dTMP, an essential precursor for DNA biosynthesis. The sequence is that of Thymidylate synthase from Bifidobacterium longum (strain NCC 2705).